The following is a 114-amino-acid chain: Cell division protein FtsB (114 aa).

The Cytoplasmic portion of the chain corresponds to 1–3 (MGK). The chain crosses the membrane as a helical span at residues 4–21 (LTLLLVVLLGWLQYSLWV). Residues 22 to 114 (GKNGVHDYMR…ASYPSVTASH (93 aa)) lie on the Periplasmic side of the membrane. Positions 31–62 (RVKQDVATQQANNAKLKSRNDQLFAEIDDLNG) form a coiled coil.

Belongs to the FtsB family. Part of a complex composed of FtsB, FtsL and FtsQ.

It is found in the cell inner membrane. Essential cell division protein. May link together the upstream cell division proteins, which are predominantly cytoplasmic, with the downstream cell division proteins, which are predominantly periplasmic. The chain is Cell division protein FtsB from Edwardsiella ictaluri (strain 93-146).